The chain runs to 74 residues: Ubiquitin-like protein FUBI (74 aa).

It belongs to the ubiquitin family.

This chain is Ubiquitin-like protein FUBI (FAU), found in Pongo abelii (Sumatran orangutan).